Consider the following 223-residue polypeptide: Cytidylate kinase (223 aa).

12–20 (GPSGVGKGT) is a binding site for ATP.

This sequence belongs to the cytidylate kinase family. Type 1 subfamily.

It localises to the cytoplasm. The catalysed reaction is CMP + ATP = CDP + ADP. The enzyme catalyses dCMP + ATP = dCDP + ADP. The protein is Cytidylate kinase of Xylella fastidiosa (strain M12).